A 545-amino-acid chain; its full sequence is Glucose-6-phosphate isomerase (545 aa).

Glu-351 functions as the Proton donor in the catalytic mechanism. Catalysis depends on residues His-382 and Lys-510.

It belongs to the GPI family.

Its subcellular location is the cytoplasm. The enzyme catalyses alpha-D-glucose 6-phosphate = beta-D-fructose 6-phosphate. It functions in the pathway carbohydrate biosynthesis; gluconeogenesis. It participates in carbohydrate degradation; glycolysis; D-glyceraldehyde 3-phosphate and glycerone phosphate from D-glucose: step 2/4. Its function is as follows. Catalyzes the reversible isomerization of glucose-6-phosphate to fructose-6-phosphate. This Shewanella baltica (strain OS195) protein is Glucose-6-phosphate isomerase.